Reading from the N-terminus, the 373-residue chain is tRNA-specific 2-thiouridylase MnmA (373 aa).

ATP contacts are provided by residues 12–19 and methionine 38; that span reads GMSGGVDS. The interaction with target base in tRNA stretch occupies residues 98–100; that stretch reads NPD. Catalysis depends on cysteine 103, which acts as the Nucleophile. Cysteine 103 and cysteine 200 are oxidised to a cystine. Residue glycine 128 coordinates ATP. The interval 150 to 152 is interaction with tRNA; sequence KDQ. The active-site Cysteine persulfide intermediate is cysteine 200. Residues 312 to 313 form an interaction with tRNA region; it reads RY.

This sequence belongs to the MnmA/TRMU family. Interacts with TusE.

Its subcellular location is the cytoplasm. The enzyme catalyses S-sulfanyl-L-cysteinyl-[protein] + uridine(34) in tRNA + AH2 + ATP = 2-thiouridine(34) in tRNA + L-cysteinyl-[protein] + A + AMP + diphosphate + H(+). In terms of biological role, catalyzes the 2-thiolation of uridine at the wobble position (U34) of tRNA(Lys), tRNA(Glu) and tRNA(Gln), leading to the formation of s(2)U34, the first step of tRNA-mnm(5)s(2)U34 synthesis. Sulfur is provided by IscS, via a sulfur-relay system. Binds ATP and its substrate tRNAs. This Yersinia enterocolitica serotype O:8 / biotype 1B (strain NCTC 13174 / 8081) protein is tRNA-specific 2-thiouridylase MnmA.